A 461-amino-acid polypeptide reads, in one-letter code: Decaprenylphosphoryl-beta-D-ribose oxidase (461 aa).

The FAD-binding PCMH-type domain maps to 19-194 (TAPSVANVLR…MRATIEMTPT (176 aa)). Residues 53 to 63 (ARGLGRSYGDN), Gly117, 122 to 125 (TVGG), 129 to 132 (CDIH), Ile184, and Tyr415 each bind FAD.

Belongs to the DprE1 family. In terms of assembly, monomer. Although forming apparent dimer in crystals, DprE1 does not dimerize appreciably in solution. Interacts with DprE2 to form an epimerase complex.

The protein resides in the periplasm. The catalysed reaction is trans,octa-cis-decaprenylphospho-beta-D-ribofuranose + FAD + H(+) = trans,octa-cis-decaprenylphospho-beta-D-erythro-pentofuranosid-2-ulose + FADH2. Its pathway is cell wall biogenesis; cell wall polysaccharide biosynthesis. Is inhibited by 8-nitro-benzothiazinones (BTZs) such as BTZ043 and PBTZ169; BTZs are a new class of antimycobacterial agents that kill M.tuberculosis in vitro, ex vivo, and in mouse models of tuberculosis. Is also inhibited by dinitrobenzamide derivatives (DNBs), which thus block formation of both cell-wall lipoarabinomannan and arabinogalactan via inhibition of decaprenyl-phospho-arabinose (DPA) synthesis; DNBs show high activity against intracellular growth of M.tuberculosis inside macrophages, including extensively drug resistant (XDR) strains. BTZs and DNBs are suicide inhibitors that act via covalent modification of DprE1; the essential nitro group of these compounds is reduced by DprE1 to a nitroso group, which then specifically reacts with Cys-387 of DprE1 to form an irreversible semimercaptal adduct. Many other compounds with diverse scaffolds were found to act as either covalent (e.g. nitroquinoxalines, nitroimidazoles) or non-covalent (e.g. the benzothiazole derivative TCA1, the 2-carboxyquinoxaline Ty38C, 8-pyrrole-benzothiazinones, 1,4-azaindoles, pyrazolopyridones, 4-aminoquinolone piperidine amides) DprE1 inhibitors. Functionally, component of the DprE1-DprE2 complex that catalyzes the 2-step epimerization of decaprenyl-phospho-ribose (DPR) to decaprenyl-phospho-arabinose (DPA), a key precursor that serves as the arabinose donor required for the synthesis of cell-wall arabinans. DprE1 catalyzes the first step of epimerization, namely FAD-dependent oxidation of the C2' hydroxyl of DPR to yield the keto intermediate decaprenyl-phospho-2'-keto-D-arabinose (DPX). The intermediate DPX is then transferred to DprE2 subunit of the epimerase complex, most probably through a 'substrate channel' at the interface of DprE1-DprE2 complex. Can also use farnesyl-phosphoryl-beta-D-ribofuranose (FPR) as substrate in vitro. In terms of biological role, dprE1 is a highly vulnerable and fully validated tuberculosis drug target. This is Decaprenylphosphoryl-beta-D-ribose oxidase from Mycobacterium tuberculosis (strain CDC 1551 / Oshkosh).